A 124-amino-acid polypeptide reads, in one-letter code: Large ribosomal subunit protein bL12 (124 aa).

It belongs to the bacterial ribosomal protein bL12 family. In terms of assembly, homodimer. Part of the ribosomal stalk of the 50S ribosomal subunit. Forms a multimeric L10(L12)X complex, where L10 forms an elongated spine to which 2 to 4 L12 dimers bind in a sequential fashion. Binds GTP-bound translation factors.

Forms part of the ribosomal stalk which helps the ribosome interact with GTP-bound translation factors. Is thus essential for accurate translation. In Chlorobium chlorochromatii (strain CaD3), this protein is Large ribosomal subunit protein bL12.